A 243-amino-acid chain; its full sequence is uncharacterized protein (243 aa).

Residues 55 to 75 (IILIILLTIFMVISTLVIAFV) form a helical membrane-spanning segment.

The protein resides in the membrane. This is an uncharacterized protein from Rickettsia prowazekii (strain Madrid E).